Reading from the N-terminus, the 261-residue chain is Cytochrome c oxidase subunit 3 (261 aa).

Residues 1–15 are Mitochondrial matrix-facing; that stretch reads MTHQTHAYHMVNPSP. A helical membrane pass occupies residues 16-34; sequence WPLTGALSALLMSSGLTMW. Residues 35 to 40 are Mitochondrial intermembrane-facing; that stretch reads FHFNSL. Residues 41-66 form a helical membrane-spanning segment; that stretch reads ILLTTGLVTNILTMYQWWRDVIREST. Residues 67 to 72 lie on the Mitochondrial matrix side of the membrane; that stretch reads FQGHHT. Residues 73–105 traverse the membrane as a helical segment; that stretch reads PVVQKGLRYGMVLFIISEVLFFTGFFWAFYHSS. Topologically, residues 106 to 128 are mitochondrial intermembrane; sequence LAPTPELGGCWPPTGINPLNPLE. Residues 129–152 form a helical membrane-spanning segment; sequence VPLLNTSVLLASGVSITWAHHSLM. Over 153 to 155 the chain is Mitochondrial matrix; it reads EGN. A helical transmembrane segment spans residues 156–183; the sequence is RKQMLQALFITIALGVYFTLLQASEYHE. At 184–190 the chain is on the mitochondrial intermembrane side; the sequence is ASFTISD. A helical transmembrane segment spans residues 191–223; the sequence is GVYGSTFFVATGFHGLHVIIGSTFLIVCFLRQL. At 224 to 232 the chain is on the mitochondrial matrix side; it reads KFHFTSDHH. Residues 233 to 256 form a helical membrane-spanning segment; it reads FGFEAAAWYWHFVDVVWLFLYVSI. The Mitochondrial intermembrane portion of the chain corresponds to 257–261; sequence YWWGS.

This sequence belongs to the cytochrome c oxidase subunit 3 family. As to quaternary structure, component of the cytochrome c oxidase (complex IV, CIV), a multisubunit enzyme composed of 14 subunits. The complex is composed of a catalytic core of 3 subunits MT-CO1, MT-CO2 and MT-CO3, encoded in the mitochondrial DNA, and 11 supernumerary subunits COX4I, COX5A, COX5B, COX6A, COX6B, COX6C, COX7A, COX7B, COX7C, COX8 and NDUFA4, which are encoded in the nuclear genome. The complex exists as a monomer or a dimer and forms supercomplexes (SCs) in the inner mitochondrial membrane with NADH-ubiquinone oxidoreductase (complex I, CI) and ubiquinol-cytochrome c oxidoreductase (cytochrome b-c1 complex, complex III, CIII), resulting in different assemblies (supercomplex SCI(1)III(2)IV(1) and megacomplex MCI(2)III(2)IV(2)).

It localises to the mitochondrion inner membrane. The catalysed reaction is 4 Fe(II)-[cytochrome c] + O2 + 8 H(+)(in) = 4 Fe(III)-[cytochrome c] + 2 H2O + 4 H(+)(out). In terms of biological role, component of the cytochrome c oxidase, the last enzyme in the mitochondrial electron transport chain which drives oxidative phosphorylation. The respiratory chain contains 3 multisubunit complexes succinate dehydrogenase (complex II, CII), ubiquinol-cytochrome c oxidoreductase (cytochrome b-c1 complex, complex III, CIII) and cytochrome c oxidase (complex IV, CIV), that cooperate to transfer electrons derived from NADH and succinate to molecular oxygen, creating an electrochemical gradient over the inner membrane that drives transmembrane transport and the ATP synthase. Cytochrome c oxidase is the component of the respiratory chain that catalyzes the reduction of oxygen to water. Electrons originating from reduced cytochrome c in the intermembrane space (IMS) are transferred via the dinuclear copper A center (CU(A)) of subunit 2 and heme A of subunit 1 to the active site in subunit 1, a binuclear center (BNC) formed by heme A3 and copper B (CU(B)). The BNC reduces molecular oxygen to 2 water molecules using 4 electrons from cytochrome c in the IMS and 4 protons from the mitochondrial matrix. The chain is Cytochrome c oxidase subunit 3 (MT-CO3) from Hippopotamus amphibius (Hippopotamus).